A 166-amino-acid polypeptide reads, in one-letter code: Small ribosomal subunit protein uS3m (166 aa).

The N-terminal 25 residues, 1–25, are a transit peptide targeting the mitochondrion; the sequence is MLRSLQHVESHINQCRRISTTSTLL.

The protein belongs to the universal ribosomal protein uS3 family. As to quaternary structure, component of the mitochondrial ribosome small subunit (28S) which comprises a 12S rRNA and about 30 distinct proteins.

Its subcellular location is the mitochondrion. The sequence is that of Small ribosomal subunit protein uS3m (mrps-24) from Caenorhabditis briggsae.